A 433-amino-acid polypeptide reads, in one-letter code: MDASDFVEDEAAIAQQKLSNEEYKIWKKNSPFLYDLVVTHALEWPSLTCQWLPDKESPAGQSYTQHRLLLGTHTSGQDQNYLQFAQVQLPTTGADGASNSAESRLDLKQYDEDKGEIGSYSATTARLSIVQKINHDGEINRARYCPQNCDLIATRSVTGKTYIFDRTKHSNTPSADGVCRPDIILEGQHKEGYGLSWSPLKQGHILAASEDTTVCHWDINNYTKPNNTLQPSATYTGHTAIVEDVAWHNHHESLFGSVGDDRQLLIWDIREPASAPKYRVEAHTGEVNALAFSPENENILVTGSSDKSVGVWDLRNLKVKLHSLESHTDEILSVCWSPHHATVLASASADRRVNLWDLSKIGQEQTPDDAEDGPPELIFVHGGHTSRPTDLAWSPHMEWALTSAAEDNIVMVWRPSKAVIDTGNEELTPDDLE.

WD repeat units follow at residues 134-174, 187-227, 237-277, 282-322, and 326-366; these read NHDG…NTPS, GQHK…KPNN, GHTA…SAPK, AHTG…VKLH, and SHTD…QEQT. Positions 368 to 372 are interaction with the histone H4 N-terminus; sequence DDAED. A WD 6 repeat occupies 383–433; it reads GHTSRPTDLAWSPHMEWALTSAAEDNIVMVWRPSKAVIDTGNEELTPDDLE.

Belongs to the WD repeat RBAP46/RBAP48/MSI1 family. As to quaternary structure, component of the HAT-B complex composed of at least HAT1 and HAT2. The HAT-B complex binds to histone H4 tail.

It is found in the cytoplasm. The protein resides in the nucleus. Its function is as follows. Regulatory subunit of the histone acetylase B (HAT-B) complex. The complex acetylates 'Lys-12' of histone H4 which is required for telomeric silencing. The protein is Histone acetyltransferase type B subunit 2 (HAT2) of Mycosarcoma maydis (Corn smut fungus).